The primary structure comprises 256 residues: uncharacterized protein (256 aa).

The N-terminal stretch at 1–22 (MGYLKRIGMCISLLIVIIFVTS) is a signal peptide. Residue Cys23 is the site of N-palmitoyl cysteine attachment. Cys23 carries S-diacylglycerol cysteine lipidation.

This sequence belongs to the staphylococcal tandem lipoprotein family.

It is found in the cell membrane. This is an uncharacterized protein from Staphylococcus aureus (strain MSSA476).